A 1133-amino-acid polypeptide reads, in one-letter code: Sterol regulatory element-binding protein 2 (1133 aa).

The tract at residues M1–L50 is transcriptional activation (acidic). Over M1–R473 the chain is Cytoplasmic. A compositionally biased stretch (gly residues) spans G56–G65. A disordered region spans residues G56–Q136. Over residues P92–Q109 the composition is skewed to low complexity. Over residues P114–P134 the composition is skewed to pro residues. The segment at Q229–G483 is interaction with LMNA. The bHLH domain occupies E322 to L372. Residues L372–N393 form a leucine-zipper region. K456 is covalently cross-linked (Glycyl lysine isopeptide (Lys-Gly) (interchain with G-Cter in SUMO2)). Residues I474–Q494 form a helical membrane-spanning segment. Residues W495 to D525 are Lumenal-facing. The chain crosses the membrane as a helical span at residues W526–V546. At K547–S1133 the chain is on the cytoplasmic side. S1090 bears the Phosphoserine mark.

The protein belongs to the SREBP family. Homodimer; efficient DNA binding of the soluble transcription factor fragment requires dimerization with another bHLH protein. Interacts with LMNA. As to quaternary structure, forms a tight complex with SCAP, the SCAP-SREBP complex, in the endoplasmic reticulum membrane and the Golgi apparatus. Interacts with PAQR3; the interaction anchors the SCAP-SREBP complex to the Golgi apparatus in low cholesterol conditions. Interacts (via C-terminal domain) with RNF139. Post-translationally, processed in the Golgi apparatus, releasing the protein from the membrane. At low cholesterol the SCAP-SREBP complex is recruited into COPII vesicles for export from the endoplasmic reticulum. In the Golgi, complex SREBPs are cleaved sequentially by site-1 (MBTPS1, S1P) and site-2 (MBTPS2, S2P) proteases. The first cleavage by site-1 protease occurs within the luminal loop, the second cleavage by site-2 protease occurs within the first transmembrane domain, releasing the transcription factor from the Golgi membrane. Apoptosis triggers cleavage by the cysteine proteases caspase-3 and caspase-7. Cleavage and activation is induced by mediated cholesterol efflux. In terms of processing, phosphorylated by AMPK, leading to suppress protein processing and nuclear translocation, and repress target gene expression. SCAP-free SREBF2 is ubiquitinated by the BCR(ARMC5) complex, leading to its degradation. Post-translationally, ubiquitinated; the nuclear form has a rapid turnover and is rapidly ubiquitinated and degraded by the proteasome in the nucleus.

It is found in the endoplasmic reticulum membrane. Its subcellular location is the golgi apparatus membrane. It localises to the cytoplasmic vesicle. The protein resides in the COPII-coated vesicle membrane. The protein localises to the nucleus. Its activity is regulated as follows. Activation by cleavage is down-regulated upon activation of SIRT3-dependent PRKAA1/AMPK-alpha signaling cascade which leads to inhibition of ATP-consuming lipogenesis to restore cellular energy balance. Functionally, precursor of the transcription factor form (Processed sterol regulatory element-binding protein 2), which is embedded in the endoplasmic reticulum membrane. Low sterol concentrations promote processing of this form, releasing the transcription factor form that translocates into the nucleus and activates transcription of genes involved in cholesterol biosynthesis. In terms of biological role, key transcription factor that regulates expression of genes involved in cholesterol biosynthesis. Binds to the sterol regulatory element 1 (SRE-1) (5'-ATCACCCCAC-3'). Has dual sequence specificity binding to both an E-box motif (5'-ATCACGTGA-3') and to SRE-1 (5'-ATCACCCCAC-3'). Regulates transcription of genes related to cholesterol synthesis pathway. Regulates hepatic lipogenesis. This is Sterol regulatory element-binding protein 2 from Rattus norvegicus (Rat).